The chain runs to 77 residues: Large ribosomal subunit protein uL24c (77 aa).

The protein belongs to the universal ribosomal protein uL24 family. Part of the 50S ribosomal subunit.

Its subcellular location is the plastid. It localises to the chloroplast. In terms of biological role, one of two assembly initiator proteins, it binds directly to the 5'-end of the 23S rRNA, where it nucleates assembly of the 50S subunit. In Trieres chinensis (Marine centric diatom), this protein is Large ribosomal subunit protein uL24c (rpl24).